A 1175-amino-acid chain; its full sequence is Potassium/sodium hyperpolarization-activated cyclic nucleotide-gated channel 4 (1175 aa).

Residues 1–259 (MDKLPPSMRK…SAGFWIIHPY (259 aa)) lie on the Cytoplasmic side of the membrane. A disordered region spans residues 17–186 (QQVGAKAWIM…SSCGEQRPAD (170 aa)). Acidic residues predominate over residues 26–36 (MDEEEDAEEEG). Low complexity predominate over residues 60–75 (PSAAAAAAGGAESRGA). Over residues 111 to 126 (SRGGGGGGGSTGGGSH) the composition is skewed to gly residues. Residues 128–140 (HLHDSAEERRLIA) are compositionally biased toward basic and acidic residues. At Ser145 the chain carries Phosphoserine. Residues 162–175 (PGAPAPPAASPPQV) show a composition bias toward pro residues. The helical transmembrane segment at 260 to 288 (SDFRFYWDLTMLLLMVGNLIIIPVGITFF) threads the bilayer. The Extracellular segment spans residues 289–292 (KDEN). Residues 293–316 (TTPWIVFNVVSDTFFLIDLVLNFR) form a helical membrane-spanning segment. Residues 317–329 (TGIVVEDNTDIIL) are Cytoplasmic-facing. The chain crosses the membrane as a helical span at residues 330-352 (DPRRIKMKYLKSWFVVDFVSSIP). Residues 353–374 (VDYIFLIVETRIDSEVYKTARA) lie on the Extracellular side of the membrane. Residues 375-410 (LRIVRFTKILSLLRLLRLSRLIRYIHQWEEIFHMTY) form a helical; Voltage-sensor membrane-spanning segment. Residues 411-413 (DLA) are Cytoplasmic-facing. Residues 414–444 (SAVVRIVNLIGMMLLLCHWDGCLQFLVPMLQ) form a helical membrane-spanning segment. The Extracellular portion of the chain corresponds to 445-449 (DFPDD). The pore-forming intramembrane region spans 450–478 (CWVSLNNMVNNSWGKQYSYALFKAMSHML). Over 479–488 (CIGYGRQAPM) the chain is Extracellular. Residues 489–521 (GMSDVWLTMLSMIVGATCYAMFIGHATALIQSL) form a helical membrane-spanning segment. The Cytoplasmic segment spans residues 522–1175 (DSSRRQYQEK…PVRSKLPSNL (654 aa)). 4 residues coordinate 3',5'-cyclic GMP: Tyr560, Lys563, Phe565, and Glu567. 3',5'-cyclic AMP is bound by residues Gly660, Glu661, Cys663, Arg670, Thr671, Val674, and Arg711. Disordered stretches follow at residues 801–820 (AIFR…AGQT) and 830–1175 (LAPS…PSNL). 4 stretches are compositionally biased toward low complexity: residues 839–854 (SPAS…SSAS), 900–912 (LGGS…SPLL), 948–966 (SPTS…LSPG), and 984–1004 (RLPF…SPRG). The span at 1038–1050 (ASSPPPPPPPPAP) shows a compositional bias: pro residues. A phosphoserine mark is found at Ser1089 and Ser1093. The span at 1102-1114 (PPFPRAPGRPPGA) shows a compositional bias: pro residues.

This sequence belongs to the potassium channel HCN family. As to quaternary structure, homotetramer. The channel is composed of a homo- or heterotetrameric complex of pore-forming subunits. Interacts with PEX5L with a 4:4 HCN4:PEX5L stoichiometry; reduces the effects of cAMP on the voltage-dependence and rate of activation. Interacts with IRAG1; regulates HCN4 channel activity. Interacts with IRAG2; regulates HCN4 channel activity. In terms of processing, S-palmitoylated. As to expression, highly expressed in the heart sinoatrial node (SAN). Not detected in atrium, ventricle, forebrain or cerebellum. Detected at very low levels in total brain.

The protein localises to the cell membrane. It catalyses the reaction K(+)(in) = K(+)(out). It carries out the reaction Na(+)(in) = Na(+)(out). With respect to regulation, activated by cAMP and to a lesser extent by cGMP and cCMP. cAMP binding causes a conformation change that leads to the assembly of an active tetramer and channel opening by shifting the voltage-dependency towards more positive voltages. Binding of cAMP removes a tonic inhibition conferred by cyclic nucleotide-binding domain (CNBD) on channel opening. Cyclic dinucleotides can modulate HCN4 channel; cyclic dinucleotides acting as potent antagonists of cAMP. Inhibited by extracellular Cs(+) ions. Auxiliary subunits can also regulate HCN4 channel. IRAG1 causes a gain-of-function by shifting HCN4 activation to more depolarized membrane potentials in the absence of cAMP. In contrast, IRAG2 causes a loss-of-function by inhibiting cAMP-dependent potentiation of HCN4 activation. Its function is as follows. Hyperpolarization-activated ion channel that are permeable to Na(+) and K(+) ions with very slow activation and inactivation. Exhibits higher selectivity for K(+) over Na(+) ions. Contributes to the native pacemaker currents in heart (If) that regulate the rhythm of heart beat. Contributes to the native pacemaker currents in neurons (Ih). May mediate responses to sour stimuli. This chain is Potassium/sodium hyperpolarization-activated cyclic nucleotide-gated channel 4 (HCN4), found in Oryctolagus cuniculus (Rabbit).